The following is a 120-amino-acid chain: MIQSKRQQGASFEYQARLFLERQGLTFIAANQRFNCGELDLIMQDQQTIVFVEVRQRKNQIFGSAIDSVDWKKQQKWLDAANLWLAQYDSSLEDADCRFDLVAFGATTNDIQWIPNFLDE.

This sequence belongs to the UPF0102 family.

The sequence is that of UPF0102 protein HSM_1206 from Histophilus somni (strain 2336) (Haemophilus somnus).